We begin with the raw amino-acid sequence, 365 residues long: Probable dual-specificity RNA methyltransferase RlmN (365 aa).

The active-site Proton acceptor is the E108. Residues 114 to 352 enclose the Radical SAM core domain; sequence YPDRNTVCIS…SCTVRDTRGR (239 aa). An intrachain disulfide couples C121 to C358. Residues C128, C132, and C135 each coordinate [4Fe-4S] cluster. S-adenosyl-L-methionine-binding positions include 179–180, S213, 236–238, and N315; these read GE and SLH. Residue C358 is the S-methylcysteine intermediate of the active site.

It belongs to the radical SAM superfamily. RlmN family. The cofactor is [4Fe-4S] cluster.

It localises to the cytoplasm. The enzyme catalyses adenosine(2503) in 23S rRNA + 2 reduced [2Fe-2S]-[ferredoxin] + 2 S-adenosyl-L-methionine = 2-methyladenosine(2503) in 23S rRNA + 5'-deoxyadenosine + L-methionine + 2 oxidized [2Fe-2S]-[ferredoxin] + S-adenosyl-L-homocysteine. It carries out the reaction adenosine(37) in tRNA + 2 reduced [2Fe-2S]-[ferredoxin] + 2 S-adenosyl-L-methionine = 2-methyladenosine(37) in tRNA + 5'-deoxyadenosine + L-methionine + 2 oxidized [2Fe-2S]-[ferredoxin] + S-adenosyl-L-homocysteine. Its function is as follows. Specifically methylates position 2 of adenine 2503 in 23S rRNA and position 2 of adenine 37 in tRNAs. This Mycolicibacterium gilvum (strain PYR-GCK) (Mycobacterium gilvum (strain PYR-GCK)) protein is Probable dual-specificity RNA methyltransferase RlmN.